Consider the following 366-residue polypeptide: RNA 3'-terminal phosphate cyclase (366 aa).

The ATP site is built by glutamine 104, proline 131, tyrosine 294, aspartate 297, glutamine 298, and histidine 320. The active-site Tele-AMP-histidine intermediate is histidine 320.

Belongs to the RNA 3'-terminal cyclase family. Type 1 subfamily.

It localises to the nucleus. The protein localises to the nucleoplasm. The catalysed reaction is a 3'-end 3'-phospho-ribonucleotide-RNA + ATP = a 3'-end 2',3'-cyclophospho-ribonucleotide-RNA + AMP + diphosphate. In terms of biological role, catalyzes the conversion of 3'-phosphate to a 2',3'-cyclic phosphodiester at the end of RNA. The mechanism of action of the enzyme occurs in 3 steps: (A) adenylation of the enzyme by ATP; (B) transfer of adenylate to an RNA-N3'P to produce RNA-N3'PP5'A; (C) and attack of the adjacent 2'-hydroxyl on the 3'-phosphorus in the diester linkage to produce the cyclic end product. Likely functions in some aspects of cellular RNA processing. Function plays an important role in regulating axon regeneration by inhibiting central nervous system (CNS) axon regeneration following optic nerve injury. In Bos taurus (Bovine), this protein is RNA 3'-terminal phosphate cyclase (RTCA).